A 507-amino-acid polypeptide reads, in one-letter code: Maturase K (507 aa).

Belongs to the intron maturase 2 family. MatK subfamily.

It localises to the plastid. It is found in the chloroplast. Its function is as follows. Usually encoded in the trnK tRNA gene intron. Probably assists in splicing its own and other chloroplast group II introns. This chain is Maturase K, found in Lyonia ferruginea (Rusty staggerbush).